Here is a 577-residue protein sequence, read N- to C-terminus: Methionine--tRNA ligase, mitochondrial (577 aa).

Residues 25-37 carry the 'HIGH' region motif; the sequence is PIFYVNAAPHIGH. The short motif at 329 to 333 is the 'KMSKS' region element; that stretch reads KMSKS. An ATP-binding site is contributed by lysine 332.

The protein belongs to the class-I aminoacyl-tRNA synthetase family.

Its subcellular location is the mitochondrion matrix. It catalyses the reaction tRNA(Met) + L-methionine + ATP = L-methionyl-tRNA(Met) + AMP + diphosphate. The chain is Methionine--tRNA ligase, mitochondrial (MSM1) from Candida albicans (Yeast).